Reading from the N-terminus, the 395-residue chain is Protein phosphatase methylesterase 1 (395 aa).

Active-site residues include serine 194, aspartate 222, and histidine 348.

This sequence belongs to the AB hydrolase superfamily.

The catalysed reaction is [phosphatase 2A protein]-C-terminal L-leucine methyl ester + H2O = [phosphatase 2A protein]-C-terminal L-leucine + methanol + H(+). Functionally, demethylates proteins that have been reversibly carboxymethylated. Demethylates the phosphatase PP2A catalytic subunit. In Kluyveromyces lactis (strain ATCC 8585 / CBS 2359 / DSM 70799 / NBRC 1267 / NRRL Y-1140 / WM37) (Yeast), this protein is Protein phosphatase methylesterase 1 (PPE1).